Reading from the N-terminus, the 330-residue chain is Glycerol-3-phosphate dehydrogenase [NAD(P)+] 1 (330 aa).

NADPH-binding residues include tryptophan 15, arginine 35, and lysine 105. 3 residues coordinate sn-glycerol 3-phosphate: lysine 105, glycine 133, and threonine 135. Alanine 137 contacts NADPH. The sn-glycerol 3-phosphate site is built by lysine 188, aspartate 241, serine 251, arginine 252, and asparagine 253. Lysine 188 acts as the Proton acceptor in catalysis. Arginine 252 is a binding site for NADPH. Positions 276 and 278 each coordinate NADPH.

Belongs to the NAD-dependent glycerol-3-phosphate dehydrogenase family.

It localises to the cytoplasm. The enzyme catalyses sn-glycerol 3-phosphate + NAD(+) = dihydroxyacetone phosphate + NADH + H(+). It catalyses the reaction sn-glycerol 3-phosphate + NADP(+) = dihydroxyacetone phosphate + NADPH + H(+). The protein operates within membrane lipid metabolism; glycerophospholipid metabolism. Functionally, catalyzes the reduction of the glycolytic intermediate dihydroxyacetone phosphate (DHAP) to sn-glycerol 3-phosphate (G3P), the key precursor for phospholipid synthesis. The chain is Glycerol-3-phosphate dehydrogenase [NAD(P)+] 1 from Sphingopyxis alaskensis (strain DSM 13593 / LMG 18877 / RB2256) (Sphingomonas alaskensis).